Here is a 406-residue protein sequence, read N- to C-terminus: uncharacterized protein (406 aa).

10 helical membrane passes run 7 to 27 (SILF…MVVI), 43 to 63 (VTLI…LITI), 69 to 89 (LTII…FYAL), 98 to 118 (LILV…FSPL), 155 to 175 (GLII…FLLF), 220 to 240 (IIIM…SVSL), 253 to 273 (WWGF…FIIY), 297 to 317 (LTLI…VLFM), 352 to 372 (VQFI…FLGV), and 374 to 394 (LVYV…FSQL).

The protein belongs to the major facilitator superfamily.

It localises to the cell membrane. This is an uncharacterized protein from Bacillus subtilis (strain 168).